Consider the following 406-residue polypeptide: Probable endo-xylogalacturonan hydrolase A (406 aa).

The first 18 residues, 1–18 (MTLYRNLLLLASLGLSYA), serve as a signal peptide directing secretion. Residue N84 is glycosylated (N-linked (GlcNAc...) asparagine). 2 PbH1 repeats span residues 183 to 213 (ATNV…DIGE) and 214 to 235 (STYV…ALKP). The active-site Proton donor is the D228. Residue H251 is part of the active site. PbH1 repeat units follow at residues 266 to 289 (VKNI…KTYP), 299 to 320 (VSNV…QIQS), and 333 to 375 (PGNA…SISG). Residues N278 and N301 are each glycosylated (N-linked (GlcNAc...) asparagine).

It belongs to the glycosyl hydrolase 28 family.

The protein localises to the secreted. Pectinolytic enzyme involved in the degradation of xylogalacturonan (xga), a galacturonan backbone heavily substituted with xylose, and which is one important component of the hairy regions of pectin. Activity requires a galacturonic acid backbone substituted with xylose. The polypeptide is Probable endo-xylogalacturonan hydrolase A (xghA) (Aspergillus niger (strain ATCC MYA-4892 / CBS 513.88 / FGSC A1513)).